We begin with the raw amino-acid sequence, 932 residues long: 2-oxoglutarate dehydrogenase E1 component (932 aa).

This sequence belongs to the alpha-ketoglutarate dehydrogenase family. As to quaternary structure, homodimer. Part of the 2-oxoglutarate dehydrogenase (OGDH) complex composed of E1 (2-oxoglutarate dehydrogenase), E2 (dihydrolipoamide succinyltransferase) and E3 (dihydrolipoamide dehydrogenase); the complex contains multiple copies of the three enzymatic components (E1, E2 and E3). Requires thiamine diphosphate as cofactor.

The enzyme catalyses N(6)-[(R)-lipoyl]-L-lysyl-[protein] + 2-oxoglutarate + H(+) = N(6)-[(R)-S(8)-succinyldihydrolipoyl]-L-lysyl-[protein] + CO2. Its function is as follows. E1 component of the 2-oxoglutarate dehydrogenase (OGDH) complex which catalyzes the decarboxylation of 2-oxoglutarate, the first step in the conversion of 2-oxoglutarate to succinyl-CoA and CO(2). This is 2-oxoglutarate dehydrogenase E1 component from Staphylococcus aureus (strain MW2).